A 291-amino-acid chain; its full sequence is Probable cell wall amidase LytH (291 aa).

The signal sequence occupies residues 1 to 40; the sequence is MKKIDSWLTKHGLKNRLTLVVIVIFIIFLILLFMFVNLSD. One can recognise an SH3b domain in the interval 41 to 105; sequence EDTGQITITE…WVAGWHTNLN (65 aa). The MurNAc-LAA domain maps to 122–286; that stretch reads IVLDPGHGGS…VEQAIVDGLK (165 aa). The tract at residues 123 to 147 is disordered; sequence VLDPGHGGSDQGASSSTPSKSLEKN. The segment covering 133-142 has biased composition (polar residues); that stretch reads QGASSSTPSK.

This sequence belongs to the N-acetylmuramoyl-L-alanine amidase 3 family.

The protein localises to the secreted. Functionally, probably involved in cell-wall metabolism. This Staphylococcus epidermidis (strain ATCC 35984 / DSM 28319 / BCRC 17069 / CCUG 31568 / BM 3577 / RP62A) protein is Probable cell wall amidase LytH (lytH).